Consider the following 354-residue polypeptide: G protein alpha o subunit (354 aa).

The N-myristoyl glycine moiety is linked to residue Gly-2. A lipid anchor (S-palmitoyl cysteine) is attached at Cys-3. The region spanning 32–354 (KDIKLLLLGA…ANNLRGCGLY (323 aa)) is the G-alpha domain. Residues 35 to 48 (KLLLLGAGESGKST) are G1 motif. Residues 40 to 47 (GAGESGKS), 176 to 182 (LRTRVKT), 201 to 205 (DVGGQ), 270 to 273 (NKKD), and Ala-326 contribute to the GTP site. Residues Ser-47 and Thr-182 each coordinate Mg(2+). Residues 174–182 (DILRTRVKT) are G2 motif. The G3 motif stretch occupies residues 197-206 (FKLFDVGGQR). The segment at 266-273 (ILFLNKKD) is G4 motif. The interval 324–329 (TCATDT) is G5 motif.

The protein belongs to the G-alpha family. G(i/o/t/z) subfamily. In terms of assembly, g proteins are composed of 3 units; alpha, beta and gamma. The alpha chain contains the guanine nucleotide binding site. In terms of tissue distribution, expressed primarily in neuronal cell bodies in the brain, optic lobe, and thoracic and abdominal ganglia. Also expressed in antenna, oocytes and ovarian nurse cells.

In terms of biological role, guanine nucleotide-binding proteins (G proteins) are involved as modulators or transducers in various transmembrane signaling systems. Plays a role in glial cell differentiation during embryogenesis; loco, Galphai and the G-protein coupled receptor, moody, are required in the surface glia to achieve effective insulation of the nerve cord. In Drosophila melanogaster (Fruit fly), this protein is G protein alpha o subunit (Galphao).